Reading from the N-terminus, the 101-residue chain is MTVRKELIKQINLTITVIKTINQKNPTPMVKNILKRYEEAKEFILQSSDGKFEEDLSKVRNKLDTLTRAYLESANDYMNPMLKEMHKTEKLLKEYDETTQS.

This is an uncharacterized protein from Bacillus subtilis (strain 168).